Reading from the N-terminus, the 215-residue chain is Peroxiredoxin (215 aa).

The Thioredoxin domain occupies 6–161 (PLIGEEFPRV…ILRAVKALQT (156 aa)). Cys48 (cysteine sulfenic acid (-SOH) intermediate) is an active-site residue. Residue Arg124 participates in substrate binding. An intrachain disulfide couples Cys205 to Cys211.

The protein belongs to the peroxiredoxin family. Prx6 subfamily. In terms of assembly, homodecamer. Pentamer of dimers that assemble into a ring structure.

It localises to the cytoplasm. The enzyme catalyses a hydroperoxide + [thioredoxin]-dithiol = an alcohol + [thioredoxin]-disulfide + H2O. In terms of biological role, thiol-specific peroxidase that catalyzes the reduction of hydrogen peroxide and organic hydroperoxides to water and alcohols, respectively. Plays a role in cell protection against oxidative stress by detoxifying peroxides. The sequence is that of Peroxiredoxin from Thermotoga maritima (strain ATCC 43589 / DSM 3109 / JCM 10099 / NBRC 100826 / MSB8).